The following is a 344-amino-acid chain: Anthranilate phosphoribosyltransferase (344 aa).

5-phospho-alpha-D-ribose 1-diphosphate contacts are provided by residues glycine 80, 83–84 (GD), threonine 88, 90–93 (NVST), 108–116 (KHGNRSVSS), and serine 120. Residue glycine 80 participates in anthranilate binding. Serine 92 is a Mg(2+) binding site. Anthranilate is bound at residue asparagine 111. Residue arginine 166 participates in anthranilate binding. Residues aspartate 225 and glutamate 226 each coordinate Mg(2+).

Belongs to the anthranilate phosphoribosyltransferase family. In terms of assembly, homodimer. The cofactor is Mg(2+).

It carries out the reaction N-(5-phospho-beta-D-ribosyl)anthranilate + diphosphate = 5-phospho-alpha-D-ribose 1-diphosphate + anthranilate. Its pathway is amino-acid biosynthesis; L-tryptophan biosynthesis; L-tryptophan from chorismate: step 2/5. Its function is as follows. Catalyzes the transfer of the phosphoribosyl group of 5-phosphorylribose-1-pyrophosphate (PRPP) to anthranilate to yield N-(5'-phosphoribosyl)-anthranilate (PRA). This chain is Anthranilate phosphoribosyltransferase, found in Legionella pneumophila (strain Paris).